A 259-amino-acid polypeptide reads, in one-letter code: tRNA pseudouridine synthase A (259 aa).

Residue Asp52 is the Nucleophile of the active site. Tyr113 contacts substrate.

The protein belongs to the tRNA pseudouridine synthase TruA family. Homodimer.

The enzyme catalyses uridine(38/39/40) in tRNA = pseudouridine(38/39/40) in tRNA. In terms of biological role, formation of pseudouridine at positions 38, 39 and 40 in the anticodon stem and loop of transfer RNAs. This chain is tRNA pseudouridine synthase A, found in Allorhizobium ampelinum (strain ATCC BAA-846 / DSM 112012 / S4) (Agrobacterium vitis (strain S4)).